Consider the following 369-residue polypeptide: UDP-N-acetylglucosamine--N-acetylmuramyl-(pentapeptide) pyrophosphoryl-undecaprenol N-acetylglucosamine transferase (369 aa).

UDP-N-acetyl-alpha-D-glucosamine-binding positions include 15–17, Asn126, Arg169, Ser197, and Gln299; that span reads TGG.

The protein belongs to the glycosyltransferase 28 family. MurG subfamily.

It is found in the cell inner membrane. It catalyses the reaction di-trans,octa-cis-undecaprenyl diphospho-N-acetyl-alpha-D-muramoyl-L-alanyl-D-glutamyl-meso-2,6-diaminopimeloyl-D-alanyl-D-alanine + UDP-N-acetyl-alpha-D-glucosamine = di-trans,octa-cis-undecaprenyl diphospho-[N-acetyl-alpha-D-glucosaminyl-(1-&gt;4)]-N-acetyl-alpha-D-muramoyl-L-alanyl-D-glutamyl-meso-2,6-diaminopimeloyl-D-alanyl-D-alanine + UDP + H(+). The protein operates within cell wall biogenesis; peptidoglycan biosynthesis. Cell wall formation. Catalyzes the transfer of a GlcNAc subunit on undecaprenyl-pyrophosphoryl-MurNAc-pentapeptide (lipid intermediate I) to form undecaprenyl-pyrophosphoryl-MurNAc-(pentapeptide)GlcNAc (lipid intermediate II). The chain is UDP-N-acetylglucosamine--N-acetylmuramyl-(pentapeptide) pyrophosphoryl-undecaprenol N-acetylglucosamine transferase from Methylorubrum extorquens (strain PA1) (Methylobacterium extorquens).